Consider the following 669-residue polypeptide: Putative transcription factor SOX-14 (669 aa).

Over residues 1–12 the composition is skewed to polar residues; the sequence is MIAKPNQATTEP. Disordered stretches follow at residues 1-149, 254-336, and 419-439; these read MIAK…EMTL, YKYR…PKYE, and SSLT…MDNI. Residues 17-37 are compositionally biased toward low complexity; that stretch reads RPGTVPTVPATTPARPATITI. Pro residues predominate over residues 52–71; sequence TLPPFSPSPSPASSPSPAPA. A compositionally biased stretch (polar residues) spans 75–84; that stretch reads GAQKTQSQAA. Residues 88 to 105 show a composition bias toward low complexity; that stretch reads PAAVASPSAPVAAAAPKT. Positions 130–145 are enriched in basic and acidic residues; the sequence is RESEMDGERSPSHSGH. A DNA-binding region (HMG box) is located at residues 187-255; it reads IKRPMNAFMV…LHMIEYPNYK (69 aa). Residues 284–294 are compositionally biased toward low complexity; sequence TTNNNNSLTTL. Residues 295–318 are compositionally biased toward polar residues; that stretch reads AINGTTTAGRKSKRSTSTCQSGSA. Over residues 322–336 the composition is skewed to basic and acidic residues; it reads LRNDSGDTSSKPKYE. The span at 419–431 shows a compositional bias: polar residues; that stretch reads SSLTQSQHNQSDP.

It localises to the nucleus. This chain is Putative transcription factor SOX-14 (Sox14), found in Drosophila melanogaster (Fruit fly).